A 52-amino-acid polypeptide reads, in one-letter code: Transmembrane protein ORF52 (52 aa).

2 helical membrane-spanning segments follow: residues 11–31 and 32–52; these read AFLG…EIIT and FMAL…GLFV.

It localises to the host membrane. This chain is Transmembrane protein ORF52, found in Acidianus filamentous virus 1 (isolate United States/Yellowstone) (AFV-1).